The chain runs to 387 residues: Patatin-03 (387 aa).

The first 23 residues, 1–23, serve as a signal peptide directing secretion; sequence MATTKSVLVLIFMILATTSSTFA. A PNPLA domain is found at 32 to 230; the sequence is LSIDGGGIKG…TVADPALLSV (199 aa). A GXGXXG motif is present at residues 36 to 41; sequence GGGIKG. A GXSXG motif is present at residues 75-79; sequence GTSTG. Catalysis depends on serine 77, which acts as the Nucleophile. 2 N-linked (GlcNAc...) asparagine glycosylation sites follow: asparagine 115 and asparagine 203. Aspartate 216 acts as the Proton acceptor in catalysis. Residues 216 to 218 carry the DGA/G motif; that stretch reads DGA.

This sequence belongs to the patatin family. In terms of tissue distribution, tuber.

It is found in the vacuole. In terms of biological role, probable lipolytic acyl hydrolase (LAH), an activity which is thought to be involved in the response of tubers to pathogens. This Solanum tuberosum (Potato) protein is Patatin-03.